A 485-amino-acid chain; its full sequence is NADH-quinone oxidoreductase subunit N (485 aa).

Transmembrane regions (helical) follow at residues 8-28 (LIALLPLLIVGLTVVVVMLSI), 35-55 (FLNATLSVLGLNAALVSLWFV), 75-95 (LYTGLVLLASLATCTFAYPWL), 105-125 (FYLLVLIAALGGILLAGANHL), 127-147 (ALFLGIELISLPLFGLVGYAF), 159-179 (YTILSAAASSFLLFGMALVYA), 203-223 (LLAGLGLMIVGLGFKLSLVPF), 235-255 (PAPVSTFLATASKIAIFGVVM), 271-291 (VVLGLIAFASIIFGNLMALSQ), 297-317 (LLGYSSISHLGYLLVALIALQ), 326-346 (VGVYLAGYLFSSLGAFGVVSL), 374-394 (AVMTVMMLSLAGIPMTLGFIG), 408-430 (WWLVAAVVVGSAIGLYYYLRVAV), and 455-475 (IVVLISALLVLVLGIWPQPLI).

It belongs to the complex I subunit 2 family. In terms of assembly, NDH-1 is composed of 13 different subunits. Subunits NuoA, H, J, K, L, M, N constitute the membrane sector of the complex.

The protein resides in the cell inner membrane. The enzyme catalyses a quinone + NADH + 5 H(+)(in) = a quinol + NAD(+) + 4 H(+)(out). Functionally, NDH-1 shuttles electrons from NADH, via FMN and iron-sulfur (Fe-S) centers, to quinones in the respiratory chain. The immediate electron acceptor for the enzyme in this species is believed to be ubiquinone. Couples the redox reaction to proton translocation (for every two electrons transferred, four hydrogen ions are translocated across the cytoplasmic membrane), and thus conserves the redox energy in a proton gradient. This chain is NADH-quinone oxidoreductase subunit N, found in Klebsiella pneumoniae (strain 342).